Here is a 62-residue protein sequence, read N- to C-terminus: MKFLYGVILIALFLTVMTATLSEARCGPCFTTDPQTQAKCSECCGRKGGVCKGPQCICGIQY.

The signal sequence occupies residues methionine 1–alanine 24. 4 disulfide bridges follow: cysteine 26–cysteine 43, cysteine 29–cysteine 51, cysteine 40–cysteine 56, and cysteine 44–cysteine 58. Tyrosine 62 is a propeptide.

Belongs to the short scorpion toxin superfamily. Chloride channel inhibitor family. Expressed by the venom gland.

It localises to the secreted. Functionally, toxin with unknown function in healthy organisms. On glioma cells, interacts with chloride channels (probably ClC-3/CLCN3) and MMP2 at the surface of glioma cells. This complex is then internalized via caveolae, thus inhibiting the chloride channels necessary for cell shrinkage and tumor propagation. Induces flaccid paralysis in H.virescens larvae. Is not toxic to S.falculata larvae or mice. This Hottentotta tamulus (Eastern Indian scorpion) protein is Lepidopteran-selective toxin.